The primary structure comprises 399 residues: MAKEKFNRTKPHVNIGTIGHVDHGKTTLSAAISAVLSLKGLAEMKDYDNIDNAPEEKERGITIATSHIEYETENRHYAHVDCPGHADYVKNMITGAAQMDGAILVVSAADGPMPQTREHILLSRQVGVPHIVVFLNKQDMVDDQELLELVEVEVRELLSAYEFPGDDTPIVAGSALKALEEAKAGSVGEWGEKVLKLMAEVDAYIPTPVRDTEKSFLMPVEDVFSIAGRGTVVTGRIERGMVKVGDEVEIVGIRATQKTTVTGVEMFRKELDKGEAGDNVGVLLRGTKKEEVERGMVLCKPGSITPHKKFEGEIYVLSKEEGGRHTPFFTNYRPQFYVRTTDVTGSITLPEGVEMVMPGDNVKITVELINSIALELGTKFAIREGGRTVGAGVVSNIIE.

Residues 10 to 209 form the tr-type G domain; sequence KPHVNIGTIG…EVDAYIPTPV (200 aa). Residues 19–26 form a G1 region; that stretch reads GHVDHGKT. 19 to 26 contacts GTP; sequence GHVDHGKT. T26 serves as a coordination point for Mg(2+). The segment at 60-64 is G2; the sequence is GITIA. The tract at residues 81-84 is G3; sequence DCPG. GTP-binding positions include 81–85 and 136–139; these read DCPGH and NKQD. The tract at residues 136–139 is G4; that stretch reads NKQD. The G5 stretch occupies residues 174-176; it reads SAL.

Belongs to the TRAFAC class translation factor GTPase superfamily. Classic translation factor GTPase family. EF-Tu/EF-1A subfamily. In terms of assembly, monomer.

It is found in the cytoplasm. It carries out the reaction GTP + H2O = GDP + phosphate + H(+). Its function is as follows. GTP hydrolase that promotes the GTP-dependent binding of aminoacyl-tRNA to the A-site of ribosomes during protein biosynthesis. The chain is Elongation factor Tu from Helicobacter acinonychis (strain Sheeba).